The chain runs to 893 residues: Alanine--tRNA ligase (893 aa).

Positions 574, 578, 678, and 682 each coordinate Zn(2+).

The protein belongs to the class-II aminoacyl-tRNA synthetase family. It depends on Zn(2+) as a cofactor.

It is found in the cytoplasm. It carries out the reaction tRNA(Ala) + L-alanine + ATP = L-alanyl-tRNA(Ala) + AMP + diphosphate. Catalyzes the attachment of alanine to tRNA(Ala) in a two-step reaction: alanine is first activated by ATP to form Ala-AMP and then transferred to the acceptor end of tRNA(Ala). Also edits incorrectly charged Ser-tRNA(Ala) and Gly-tRNA(Ala) via its editing domain. This chain is Alanine--tRNA ligase, found in Bifidobacterium longum (strain NCC 2705).